Reading from the N-terminus, the 538-residue chain is Cytochrome P450 monooxygenase astC (538 aa).

A helical transmembrane segment spans residues 18–38; that stretch reads ALMLPALVGCALLIYRAFFAI. C481 is a heme binding site.

Belongs to the cytochrome P450 family. The cofactor is heme.

The protein resides in the membrane. It functions in the pathway secondary metabolite biosynthesis; terpenoid biosynthesis. Functionally, cytochrome P450 monooxygenase; part of the gene cluster that mediates the biosynthesis of the sesquiterpenoid aspterric acid (AA), an inhibitor of dihydroxy-acid dehydratase (DHAD) effective as an herbicide. AstC catalyzes the third and last step within the pathway and converts the alpha-epoxy carboxylate intermediate produced by the cytochrome P450 monooxygenase astC from (-)daucane into the tricyclic aspterric acid. This is Cytochrome P450 monooxygenase astC from Aspergillus terreus (strain NIH 2624 / FGSC A1156).